We begin with the raw amino-acid sequence, 230 residues long: Cytidylate kinase (230 aa).

17–25 (GPTASGKGT) lines the ATP pocket.

It belongs to the cytidylate kinase family. Type 1 subfamily.

It is found in the cytoplasm. The enzyme catalyses CMP + ATP = CDP + ADP. The catalysed reaction is dCMP + ATP = dCDP + ADP. The protein is Cytidylate kinase of Ralstonia nicotianae (strain ATCC BAA-1114 / GMI1000) (Ralstonia solanacearum).